Consider the following 216-residue polypeptide: Orotate phosphoribosyltransferase (216 aa).

5-phospho-alpha-D-ribose 1-diphosphate contacts are provided by residues Arg100, Lys104, His106, and 126–134 (EDLISTGGS). Ser130 provides a ligand contact to orotate.

This sequence belongs to the purine/pyrimidine phosphoribosyltransferase family. PyrE subfamily. In terms of assembly, homodimer. Interacts with BrxC. Mg(2+) serves as cofactor.

It carries out the reaction orotidine 5'-phosphate + diphosphate = orotate + 5-phospho-alpha-D-ribose 1-diphosphate. It participates in pyrimidine metabolism; UMP biosynthesis via de novo pathway; UMP from orotate: step 1/2. Functionally, catalyzes the transfer of a ribosyl phosphate group from 5-phosphoribose 1-diphosphate to orotate, leading to the formation of orotidine monophosphate (OMP). The chain is Orotate phosphoribosyltransferase from Bacillus subtilis (strain 168).